Consider the following 344-residue polypeptide: Uroporphyrinogen decarboxylase (344 aa).

Residues 24 to 28, Phe43, Asp74, Tyr151, Ser206, and His323 each bind substrate; that span reads RQAGR.

This sequence belongs to the uroporphyrinogen decarboxylase family. As to quaternary structure, homodimer.

Its subcellular location is the cytoplasm. It catalyses the reaction uroporphyrinogen III + 4 H(+) = coproporphyrinogen III + 4 CO2. It participates in porphyrin-containing compound metabolism; protoporphyrin-IX biosynthesis; coproporphyrinogen-III from 5-aminolevulinate: step 4/4. In terms of biological role, catalyzes the decarboxylation of four acetate groups of uroporphyrinogen-III to yield coproporphyrinogen-III. This chain is Uroporphyrinogen decarboxylase, found in Rhodobacter capsulatus (Rhodopseudomonas capsulata).